Here is a 267-residue protein sequence, read N- to C-terminus: Hydroxyethylthiazole kinase 2 (267 aa).

Met-41 provides a ligand contact to substrate. Lys-116 and Thr-166 together coordinate ATP. Gly-193 serves as a coordination point for substrate.

It belongs to the Thz kinase family. Mg(2+) is required as a cofactor.

It carries out the reaction 5-(2-hydroxyethyl)-4-methylthiazole + ATP = 4-methyl-5-(2-phosphooxyethyl)-thiazole + ADP + H(+). The protein operates within cofactor biosynthesis; thiamine diphosphate biosynthesis; 4-methyl-5-(2-phosphoethyl)-thiazole from 5-(2-hydroxyethyl)-4-methylthiazole: step 1/1. In terms of biological role, catalyzes the phosphorylation of the hydroxyl group of 4-methyl-5-beta-hydroxyethylthiazole (THZ). In Streptococcus pneumoniae (strain Hungary19A-6), this protein is Hydroxyethylthiazole kinase 2.